The chain runs to 264 residues: 3-methyl-2-oxobutanoate hydroxymethyltransferase (264 aa).

Residues Asp45 and Asp84 each contribute to the Mg(2+) site. 3-methyl-2-oxobutanoate is bound by residues 45–46 (DS), Asp84, and Lys112. Residue Glu114 coordinates Mg(2+). Residue Glu181 is the Proton acceptor of the active site.

It belongs to the PanB family. As to quaternary structure, homodecamer; pentamer of dimers. Mg(2+) serves as cofactor.

Its subcellular location is the cytoplasm. It carries out the reaction 3-methyl-2-oxobutanoate + (6R)-5,10-methylene-5,6,7,8-tetrahydrofolate + H2O = 2-dehydropantoate + (6S)-5,6,7,8-tetrahydrofolate. It participates in cofactor biosynthesis; (R)-pantothenate biosynthesis; (R)-pantoate from 3-methyl-2-oxobutanoate: step 1/2. Its function is as follows. Catalyzes the reversible reaction in which hydroxymethyl group from 5,10-methylenetetrahydrofolate is transferred onto alpha-ketoisovalerate to form ketopantoate. In Shigella boydii serotype 18 (strain CDC 3083-94 / BS512), this protein is 3-methyl-2-oxobutanoate hydroxymethyltransferase.